Consider the following 149-residue polypeptide: Protein FAM72C (149 aa).

It belongs to the FAM72 family.

This Homo sapiens (Human) protein is Protein FAM72C (FAM72C).